We begin with the raw amino-acid sequence, 425 residues long: Putative E3 ubiquitin-protein ligase UBR7 (425 aa).

The UBR-type zinc-finger motif lies at 44 to 116 (EKCSYSQGSV…KNLECKLLPD (73 aa)). The segment at 132 to 188 (GLYCICKRPYPDPEDEIPDEMIQCVVCEDWFHGRHLGAIPPESGDFQEMVCQACMKR) adopts a PHD-type; atypical zinc-finger fold. Residues lysine 225 and lysine 252 each participate in a glycyl lysine isopeptide (Lys-Gly) (interchain with G-Cter in SUMO2) cross-link. The tract at residues 225–246 (KPENGEHQDSTLKEDVPEQGKD) is disordered. Serine 264 bears the Phosphoserine mark. Lysine 274 is covalently cross-linked (Glycyl lysine isopeptide (Lys-Gly) (interchain with G-Cter in SUMO2)). A Phosphoserine modification is found at serine 354. Lysine 398 is covalently cross-linked (Glycyl lysine isopeptide (Lys-Gly) (interchain with G-Cter in SUMO2)).

As to expression, expressed in sperm (at protein level).

The catalysed reaction is S-ubiquitinyl-[E2 ubiquitin-conjugating enzyme]-L-cysteine + [acceptor protein]-L-lysine = [E2 ubiquitin-conjugating enzyme]-L-cysteine + N(6)-ubiquitinyl-[acceptor protein]-L-lysine.. It participates in protein modification; protein ubiquitination. In terms of biological role, E3 ubiquitin-protein ligase which is a component of the N-end rule pathway. Recognizes and binds to proteins bearing specific N-terminal residues that are destabilizing according to the N-end rule, leading to their ubiquitination and subsequent degradation. The sequence is that of Putative E3 ubiquitin-protein ligase UBR7 (UBR7) from Homo sapiens (Human).